The chain runs to 773 residues: E3 ubiquitin-protein ligase msl-2 (773 aa).

Positions 41, 44, 59, 61, 64, 67, 78, and 84 each coordinate Zn(2+). The RING-type zinc-finger motif lies at 41 to 85; the sequence is CVVCCQLLVDPYSPKGKRCQHNVCRLCLRGKKHLFPSCTQCEGCS. The stretch at 424-468 forms a coiled coil; that stretch reads VQTELQDAESLQKDFEDAKAAAEEAKEKEKDLHAISAELQKEDSD. The tract at residues 460 to 525 is disordered; sequence AELQKEDSDE…EKVKPPKPKC (66 aa). A CXC MSL2-type domain is found at 520–571; that stretch reads PPKPKCRCGISGSSNTLTTCRNSRCPCYKSYNSCAGCHCVCCKNPHKEDYVE. Residues cysteine 525, cysteine 527, cysteine 539, cysteine 544, cysteine 546, cysteine 553, cysteine 556, cysteine 558, and cysteine 561 each coordinate Zn(2+). The C-terminal disordered region (CTD) stretch occupies residues 571-773; the sequence is ESDEDDDLED…EEIMSGSDDL (203 aa). Residues 572–581 are compositionally biased toward acidic residues; it reads SDEDDDLEDF. Residues 572–616 are disordered; sequence SDEDDDLEDFEMPKDVPEPMTQSEEPVVAEPRQEENSMAPPDSSA. Positions 620 to 685 are clamp-binding domain (CBD); it reads LVPLNNLQQS…SLPQYAYIMP (66 aa). A pro/Bas region region spans residues 650–708; it reads QGSKPLDPVTVGFTIRVQLQHTDGFGSLPQYAYIMPTIDPPNPPAPSLSPPPPPAPDRE. Pro residues predominate over residues 687-704; it reads IDPPNPPAPSLSPPPPPA. Residues 687–773 are disordered; sequence IDPPNPPAPS…EEIMSGSDDL (87 aa). Residues 705–714 are compositionally biased toward basic and acidic residues; that stretch reads PDREVIEPPA. Basic residues predominate over residues 715-726; the sequence is KKFRTSRTRRGR. Positions 742–759 are enriched in polar residues; the sequence is GSRSNSAAGDRSSATDNA.

Belongs to the MSL2 family. As to quaternary structure, component of the male-specific lethal (MSL) histone acetyltransferase complex, composed of mof, mle, msl-1, msl-2 and msl-3 proteins, as well as roX1 and roX2 non-coding RNAs. When not associated with chromatin, the MSL complex associates with msl-2 mRNAs, possibly to regulate the amount of available MSL complex. Interacts with Clamp; promoting cooperative binding to DNA PionX sites and recruitment of the MSL complex to chromatin. In terms of processing, autoubiquitinated.

It localises to the nucleus. Its subcellular location is the chromosome. The enzyme catalyses S-ubiquitinyl-[E2 ubiquitin-conjugating enzyme]-L-cysteine + [acceptor protein]-L-lysine = [E2 ubiquitin-conjugating enzyme]-L-cysteine + N(6)-ubiquitinyl-[acceptor protein]-L-lysine.. It functions in the pathway protein modification; protein ubiquitination. Its function is as follows. Limiting component of the male-specific lethal (MSL) histone acetyltransferase complex, a multiprotein complex essential for elevating transcription of the single X chromosome in the male (X chromosome dosage compensation). The MSL complex specifically associates with the single X chromosome in males and mediates formation of H4K16ac, promoting a two-fold activation of X chromosome. Msl-2 is only produced in males, constituting the limiting component of the MSL complex. Within the MSL complex, msl-2 mediates the selective binding to the X chromosome and recruitment of the MSL complex via two different mechanisms. Recognizes DNA motifs that are enriched on X chromosome, named PionX sites, which are characterized by sequence features and distinct DNA conformation (base roll). Specific recognition of the X chromosome is also mediated by the formation of a gel-like state: msl-2 undergoes liquid-liquid phase separation upon binding to roX1 and roX2 non-coding RNAs, leading to nucleate the MSL complex on the X chromosome. Msl-2 is also required for translation and/or stability of msl-1 in males. Also acts as an E3 ubiquitin ligase: in complex with msl-1, mediates ubiquitination of histone H2B at 'Lys-34' (H2BK34Ub). Also catalyzes ubiquitination of msl-1, msl-3 and mof components of the MSL complex. This is E3 ubiquitin-protein ligase msl-2 from Drosophila melanogaster (Fruit fly).